The following is a 290-amino-acid chain: 4-diphosphocytidyl-2-C-methyl-D-erythritol kinase (290 aa).

Lys13 is an active-site residue. 96-106 (PMGGGIGGGSS) contacts ATP. Residue Asp138 is part of the active site.

It belongs to the GHMP kinase family. IspE subfamily.

The catalysed reaction is 4-CDP-2-C-methyl-D-erythritol + ATP = 4-CDP-2-C-methyl-D-erythritol 2-phosphate + ADP + H(+). It participates in isoprenoid biosynthesis; isopentenyl diphosphate biosynthesis via DXP pathway; isopentenyl diphosphate from 1-deoxy-D-xylulose 5-phosphate: step 3/6. In terms of biological role, catalyzes the phosphorylation of the position 2 hydroxy group of 4-diphosphocytidyl-2C-methyl-D-erythritol. The sequence is that of 4-diphosphocytidyl-2-C-methyl-D-erythritol kinase from Vibrio cholerae serotype O1 (strain ATCC 39541 / Classical Ogawa 395 / O395).